The following is a 173-amino-acid chain: ATP synthase subunit b (173 aa).

The chain crosses the membrane as a helical span at residues 18–38 (IFWSLVILIIVAVFFYKFFLP).

Belongs to the ATPase B chain family. In terms of assembly, F-type ATPases have 2 components, F(1) - the catalytic core - and F(0) - the membrane proton channel. F(1) has five subunits: alpha(3), beta(3), gamma(1), delta(1), epsilon(1). F(0) has three main subunits: a(1), b(2) and c(10-14). The alpha and beta chains form an alternating ring which encloses part of the gamma chain. F(1) is attached to F(0) by a central stalk formed by the gamma and epsilon chains, while a peripheral stalk is formed by the delta and b chains.

It is found in the cell membrane. In terms of biological role, f(1)F(0) ATP synthase produces ATP from ADP in the presence of a proton or sodium gradient. F-type ATPases consist of two structural domains, F(1) containing the extramembraneous catalytic core and F(0) containing the membrane proton channel, linked together by a central stalk and a peripheral stalk. During catalysis, ATP synthesis in the catalytic domain of F(1) is coupled via a rotary mechanism of the central stalk subunits to proton translocation. Its function is as follows. Component of the F(0) channel, it forms part of the peripheral stalk, linking F(1) to F(0). This chain is ATP synthase subunit b, found in Bifidobacterium adolescentis (strain ATCC 15703 / DSM 20083 / NCTC 11814 / E194a).